A 301-amino-acid polypeptide reads, in one-letter code: Phosphatidylglycerol--prolipoprotein diacylglyceryl transferase (301 aa).

7 helical membrane passes run 17-37, 59-79, 97-117, 129-149, 203-223, 230-250, and 257-277; these read LAVRWYGLMYLVAFIMAIVVG, MLFYGVLGTILGGRFGYVLFY, GGMSFHGGFLGVTFAMILFAW, FVAPMVPAGLAAGRLGNFING, PSQLYEIALEGVVLFLVLWLF, VGAASAVFLIGYGLARFTVEF, and FLGLLALGLSMGQWLSLPMII. Arginine 142 is an a 1,2-diacyl-sn-glycero-3-phospho-(1'-sn-glycerol) binding site.

Belongs to the Lgt family.

The protein localises to the cell inner membrane. The catalysed reaction is L-cysteinyl-[prolipoprotein] + a 1,2-diacyl-sn-glycero-3-phospho-(1'-sn-glycerol) = an S-1,2-diacyl-sn-glyceryl-L-cysteinyl-[prolipoprotein] + sn-glycerol 1-phosphate + H(+). It participates in protein modification; lipoprotein biosynthesis (diacylglyceryl transfer). In terms of biological role, catalyzes the transfer of the diacylglyceryl group from phosphatidylglycerol to the sulfhydryl group of the N-terminal cysteine of a prolipoprotein, the first step in the formation of mature lipoproteins. This is Phosphatidylglycerol--prolipoprotein diacylglyceryl transferase from Paraburkholderia phymatum (strain DSM 17167 / CIP 108236 / LMG 21445 / STM815) (Burkholderia phymatum).